The sequence spans 282 residues: Probable protein phosphatase 2C 45 (282 aa).

The PPM-type phosphatase domain maps to 27–272 (SYGYASSPGK…DNITCVVVRF (246 aa)). Positions 63, 64, 224, and 263 each coordinate Mn(2+).

Belongs to the PP2C family. Requires Mg(2+) as cofactor. It depends on Mn(2+) as a cofactor.

It catalyses the reaction O-phospho-L-seryl-[protein] + H2O = L-seryl-[protein] + phosphate. It carries out the reaction O-phospho-L-threonyl-[protein] + H2O = L-threonyl-[protein] + phosphate. This is Probable protein phosphatase 2C 45 from Oryza sativa subsp. japonica (Rice).